We begin with the raw amino-acid sequence, 269 residues long: Small ribosomal subunit protein uS2 (269 aa).

It belongs to the universal ribosomal protein uS2 family.

The protein is Small ribosomal subunit protein uS2 (rpsB) of Synechocystis sp. (strain ATCC 27184 / PCC 6803 / Kazusa).